The chain runs to 137 residues: Large ribosomal subunit protein uL16 (137 aa).

It belongs to the universal ribosomal protein uL16 family. As to quaternary structure, part of the 50S ribosomal subunit.

Binds 23S rRNA and is also seen to make contacts with the A and possibly P site tRNAs. This chain is Large ribosomal subunit protein uL16, found in Magnetococcus marinus (strain ATCC BAA-1437 / JCM 17883 / MC-1).